A 197-amino-acid polypeptide reads, in one-letter code: Molybdenum cofactor guanylyltransferase (197 aa).

GTP is bound by residues 10–12 (LAG), Lys23, Asn51, Asp69, and Asp99. Mg(2+) is bound at residue Asp99.

Belongs to the MobA family. As to quaternary structure, monomer. Mg(2+) serves as cofactor.

The protein resides in the cytoplasm. The catalysed reaction is Mo-molybdopterin + GTP + H(+) = Mo-molybdopterin guanine dinucleotide + diphosphate. Transfers a GMP moiety from GTP to Mo-molybdopterin (Mo-MPT) cofactor (Moco or molybdenum cofactor) to form Mo-molybdopterin guanine dinucleotide (Mo-MGD) cofactor. The polypeptide is Molybdenum cofactor guanylyltransferase (Shewanella sp. (strain MR-4)).